The primary structure comprises 401 residues: MTETAPWTTRKPTAMLVLADGTVIEGTGIGATGKVQAEVCFNTALTGYEEILTDPSYLGQIVTFTFPHIGNVGTNEEDIEDLTPAARRGAVGVIFKADITDPSNFRAVKHLDAWLKARGVIGLCGIDTRALTAWIRENGAPNAVIAHDPNGVFDIEALKAEAKAWSGLVGLDLAIEATSGQSSTWTETPWVWNKGYGTLGEADAKYHVVCVDFGVKRNILRLFAGLDCKVTVVPAQTSAEDILALKPDGVFLSNGPGDPAATGEYAVPVIQNLIKSELPIFGICLGHQMLGLAVGAKTEKMHQGHHGANHPVKDFTTGKVEIVSMNHGFAVDTKSLPEGVEETHTSLFDGTNCGLRIVGKPVFSVQHHPEASPGPQDSHYLFRRFVNLLRENKGEAALAER.

Residues 1–203 (MTETAPWTTR…KGYGTLGEAD (203 aa)) form a CPSase region. Residues Ser-56, Gly-255, and Gly-257 each contribute to the L-glutamine site. Residues 207–395 (HVVCVDFGVK…VNLLRENKGE (189 aa)) form the Glutamine amidotransferase type-1 domain. Catalysis depends on Cys-284, which acts as the Nucleophile. Leu-285, Gln-288, Asn-326, Gly-328, and Phe-329 together coordinate L-glutamine. Residues His-368 and Glu-370 contribute to the active site.

It belongs to the CarA family. As to quaternary structure, composed of two chains; the small (or glutamine) chain promotes the hydrolysis of glutamine to ammonia, which is used by the large (or ammonia) chain to synthesize carbamoyl phosphate. Tetramer of heterodimers (alpha,beta)4.

It carries out the reaction hydrogencarbonate + L-glutamine + 2 ATP + H2O = carbamoyl phosphate + L-glutamate + 2 ADP + phosphate + 2 H(+). It catalyses the reaction L-glutamine + H2O = L-glutamate + NH4(+). It participates in amino-acid biosynthesis; L-arginine biosynthesis; carbamoyl phosphate from bicarbonate: step 1/1. Its pathway is pyrimidine metabolism; UMP biosynthesis via de novo pathway; (S)-dihydroorotate from bicarbonate: step 1/3. Functionally, small subunit of the glutamine-dependent carbamoyl phosphate synthetase (CPSase). CPSase catalyzes the formation of carbamoyl phosphate from the ammonia moiety of glutamine, carbonate, and phosphate donated by ATP, constituting the first step of 2 biosynthetic pathways, one leading to arginine and/or urea and the other to pyrimidine nucleotides. The small subunit (glutamine amidotransferase) binds and cleaves glutamine to supply the large subunit with the substrate ammonia. In Agrobacterium fabrum (strain C58 / ATCC 33970) (Agrobacterium tumefaciens (strain C58)), this protein is Carbamoyl phosphate synthase small chain.